The sequence spans 136 residues: Peptide methionine sulfoxide reductase MsrB (136 aa).

In terms of domain architecture, MsrB spans 6–128; it reads EVSLYKELTD…NSAALSFTDE (123 aa). Positions 45, 48, 94, and 97 each coordinate Zn(2+). The Nucleophile role is filled by C117.

It belongs to the MsrB Met sulfoxide reductase family. Zn(2+) is required as a cofactor.

It carries out the reaction L-methionyl-[protein] + [thioredoxin]-disulfide + H2O = L-methionyl-(R)-S-oxide-[protein] + [thioredoxin]-dithiol. The protein is Peptide methionine sulfoxide reductase MsrB of Photorhabdus laumondii subsp. laumondii (strain DSM 15139 / CIP 105565 / TT01) (Photorhabdus luminescens subsp. laumondii).